The sequence spans 370 residues: Putative glutamate--cysteine ligase 2 (370 aa).

The protein belongs to the glutamate--cysteine ligase type 2 family. YbdK subfamily.

It carries out the reaction L-cysteine + L-glutamate + ATP = gamma-L-glutamyl-L-cysteine + ADP + phosphate + H(+). In terms of biological role, ATP-dependent carboxylate-amine ligase which exhibits weak glutamate--cysteine ligase activity. This chain is Putative glutamate--cysteine ligase 2, found in Methylibium petroleiphilum (strain ATCC BAA-1232 / LMG 22953 / PM1).